A 68-amino-acid chain; its full sequence is Probable tautomerase HP_0924 (68 aa).

P2 serves as the catalytic Proton acceptor; via imino nitrogen.

The protein belongs to the 4-oxalocrotonate tautomerase family.

In Helicobacter pylori (strain ATCC 700392 / 26695) (Campylobacter pylori), this protein is Probable tautomerase HP_0924.